A 263-amino-acid polypeptide reads, in one-letter code: Large ribosomal subunit protein uL23m (263 aa).

Residues 1–45 (MPRLTVGTKNMLYPLQKTLAVGSCKPEQVPIRSLASVVESSSKIL) constitute a mitochondrion transit peptide.

This sequence belongs to the universal ribosomal protein uL23 family. In terms of assembly, component of the mitochondrial large ribosomal subunit (mt-LSU). Mature yeast 74S mitochondrial ribosomes consist of a small (37S) and a large (54S) subunit. The 37S small subunit contains a 15S ribosomal RNA (15S mt-rRNA) and 34 different proteins. The 54S large subunit contains a 21S rRNA (21S mt-rRNA) and 46 different proteins. uL23m forms the wall of the exit tunnel. Interacts with the C-terminus of OXA1.

The protein resides in the mitochondrion. Functionally, component of the mitochondrial ribosome (mitoribosome), a dedicated translation machinery responsible for the synthesis of mitochondrial genome-encoded proteins, including at least some of the essential transmembrane subunits of the mitochondrial respiratory chain. The mitoribosomes are attached to the mitochondrial inner membrane and translation products are cotranslationally integrated into the membrane. This chain is Large ribosomal subunit protein uL23m (MRP20), found in Saccharomyces cerevisiae (strain ATCC 204508 / S288c) (Baker's yeast).